A 289-amino-acid chain; its full sequence is E3 ubiquitin-protein ligase MARCHF8 (289 aa).

Residues 1 to 68 form a disordered region; the sequence is MNMPLHQISA…SAPVSSFPRT (68 aa). Over residues 25-39 the composition is skewed to basic and acidic residues; that stretch reads KTKEKEREEQNEKTL. Low complexity predominate over residues 50-64; it reads SKAGGSSVASAPVSS. The RING-CH-type zinc finger occupies 70 to 131; sequence VTPSNQDICR…ELCKYEFIME (62 aa). Zn(2+) is bound by residues Cys-78, Cys-81, Cys-95, Cys-97, His-105, Cys-108, Cys-121, and Cys-124. The next 2 helical transmembrane spans lie at 155–175 and 195–215; these read CSVT…YVLI and FWTK…FMYV.

Interacts with CD86.

Its subcellular location is the golgi apparatus membrane. It localises to the endoplasmic reticulum membrane. The protein localises to the cytoplasmic vesicle membrane. It is found in the lysosome membrane. The protein resides in the early endosome membrane. The enzyme catalyses S-ubiquitinyl-[E2 ubiquitin-conjugating enzyme]-L-cysteine + [acceptor protein]-L-lysine = [E2 ubiquitin-conjugating enzyme]-L-cysteine + N(6)-ubiquitinyl-[acceptor protein]-L-lysine.. Its pathway is protein modification; protein ubiquitination. Functionally, E3 ubiquitin-protein ligase that plays several important roles in innate immunity and adaptive immunity. Mediates ubiquitination of CD86 and MHC class II proteins, such as HLA-DR alpha and beta, and promotes their subsequent endocytosis and sorting to lysosomes via multivesicular bodies. Possesses a very broad antiviral activity by specifically inactivating different viral fusion proteins. Targets and ubiquitinates cytoplasmic lysine residues of viral envelope glycoproteins with single transmembrane domains leading to their lysosomal degradation. Mediates the regulation of constitutive ubiquitination and trafficking of the viral restriction factor BST2 within the endocytic pathway. Plays a role in maintenance of immune tolerance to self by promoting the turnover and proteasomal degradation of PD-L1/CD274 via ubiquitination. Catalyzes the 'Lys-63'-linked polyubiquitylation of cGAS thereby inhibiting its DNA binding ability and impairing its antiviral innate immunity. Negatively regulates IL7-mediated T-cell homeostasis by mediating 'Lys-27'-linked polyubiquitination of IL7R, leading to its lysosomal degradation. This chain is E3 ubiquitin-protein ligase MARCHF8 (MARCHF8), found in Bos taurus (Bovine).